We begin with the raw amino-acid sequence, 233 residues long: Peroxisomal membrane protein 11-5 (233 aa).

The Cytoplasmic portion of the chain corresponds to 1 to 92; the sequence is MSSLESARAD…PLILLGKSKN (92 aa). Residues 93–113 form a helical membrane-spanning segment; it reads ALLSTFLFLDQIVWAGRTGIY. Over 114–206 the chain is Lumenal; it reads KNKERAEFLS…LLQLAPKKVT (93 aa). A helical transmembrane segment spans residues 207-226; it reads PRVTGAFGFASSLIACYQLL.

This sequence belongs to the peroxin-11 family. As to expression, expressed in seedlings, roots, shoots, leaf sheaths, flag leaf, panicles, spikelets, and endosperm.

The protein resides in the peroxisome membrane. Involved in peroxisomal proliferation. This is Peroxisomal membrane protein 11-5 (PEX11-5) from Oryza sativa subsp. japonica (Rice).